Consider the following 2269-residue polypeptide: Neuron navigator 3 (2269 aa).

A Calponin-homology (CH) domain is found at 55–162 (SKICKIYTDW…LFFILSRYKQ (108 aa)). The segment covering 186-207 (TGAAQLSQHKTQDMQSSLTARY) has biased composition (polar residues). Disordered regions lie at residues 186-358 (TGAA…RSML) and 388-532 (SEFG…NKGS). The segment covering 236–252 (GSGSNSSKGSSNLNRRS) has biased composition (low complexity). 2 stretches are compositionally biased toward polar residues: residues 267–291 (ASGN…QQLA) and 305–319 (SKSM…SSML). Positions 323 to 333 (PPSPTSSPTPP) are enriched in pro residues. The segment covering 346 to 356 (ASKSAPGNQRS) has biased composition (polar residues). Residues 411-432 (PSASAFAPPSKSNNCKNHNNKS) show a composition bias toward low complexity. Residues 505 to 518 (TATSKPAGTQSCVP) show a composition bias toward polar residues. Residues 644 to 672 (ETRRMRTVKNIADLRQNLEETMSSLRGTQ) adopt a coiled-coil conformation. 6 disordered regions span residues 692-737 (GRGL…STTV), 756-776 (ASGA…VGPE), 836-1036 (VKEM…IPGP), 1050-1079 (SGSA…TSLD), 1097-1412 (VPLQ…GTTC), and 1461-1487 (GGSA…TDEV). Composition is skewed to polar residues over residues 699 to 716 (SSRS…SSPR) and 727 to 737 (PPRSSAGSTTV). The segment covering 847-860 (DSSSVSSGLSDTLD) has biased composition (low complexity). Polar residues predominate over residues 874-886 (GISSRKSKAAQSN). Over residues 919-932 (PSCKWKTSSPSSSC) the composition is skewed to low complexity. The segment covering 939 to 950 (QKTGLPMSQTGS) has biased composition (polar residues). Positions 977-989 (GKTDDAKASEKGK) are enriched in basic and acidic residues. A compositionally biased stretch (low complexity) spans 1110 to 1137 (SSSGGSSVVSRSGHRSSSSSIDSNVSGK). Positions 1163–1172 (GRSSPVTINQ) are enriched in polar residues. Low complexity-rich tracts occupy residues 1185–1202 (GTGL…TQSG) and 1223–1234 (GSKASSKPSSPG). Gly residues predominate over residues 1266 to 1276 (GSLGSMGGQSG). A compositionally biased stretch (low complexity) spans 1292-1305 (SPASSPASGLSLPS). Composition is skewed to polar residues over residues 1313–1339 (NLSS…SSES) and 1354–1363 (RTGSVKSTLS). Residues 1381–1391 (TSHEEGKEWLR) are compositionally biased toward basic and acidic residues. Over residues 1392-1412 (SHSTGGLQDTGSPLSPPGTTC) the composition is skewed to polar residues. The stretch at 1499-1586 (SSLYSAQIRK…TDAQTAIQVA (88 aa)) forms a coiled coil. Disordered regions lie at residues 1602 to 1672 (QHSS…PSSP), 1756 to 1792 (NDRL…SRQS), and 2207 to 2269 (GYSS…ESAL). Low complexity-rich tracts occupy residues 1605 to 1623 (SESM…LGSA) and 1765 to 1792 (TTPA…SRQS). Positions 1697 to 1765 (CECTEAEAEI…NDRLKSSGNT (69 aa)) form a coiled coil. Residues 2208–2224 (YSSSKDGAASKQVSQSD) are compositionally biased toward polar residues.

This sequence belongs to the Nav/unc-53 family. As to quaternary structure, interacts with F-actin.

Its subcellular location is the nucleus outer membrane. The protein resides in the golgi apparatus. The protein localises to the cell projection. It is found in the lamellipodium. It localises to the filopodium. Functionally, involved in liver and heart organogenesis during embryo development. Plays a role in the migration of hepatoblasts from the intestinal endoderm during liver organogenesis; possibly by modulating actin polymerization during hepatoblast outgrowth. May be involved in neuron regeneration. The protein is Neuron navigator 3 (nav3) of Danio rerio (Zebrafish).